The chain runs to 462 residues: Glutamate--tRNA ligase 1 (462 aa).

The short motif at 8–18 is the 'HIGH' region element; sequence PSPTGYLHIGG. The short motif at 236-240 is the 'KMSKS' region element; sequence KLSKR. Position 239 (lysine 239) interacts with ATP.

The protein belongs to the class-I aminoacyl-tRNA synthetase family. Glutamate--tRNA ligase type 1 subfamily. In terms of assembly, monomer.

It localises to the cytoplasm. It catalyses the reaction tRNA(Glu) + L-glutamate + ATP = L-glutamyl-tRNA(Glu) + AMP + diphosphate. Its function is as follows. Catalyzes the attachment of glutamate to tRNA(Glu) in a two-step reaction: glutamate is first activated by ATP to form Glu-AMP and then transferred to the acceptor end of tRNA(Glu). The protein is Glutamate--tRNA ligase 1 of Sulfurovum sp. (strain NBC37-1).